The primary structure comprises 372 residues: DNA replication and repair protein RecF (372 aa).

ATP is bound at residue 30-37; that stretch reads GENGQGKT.

Belongs to the RecF family.

Its subcellular location is the cytoplasm. In terms of biological role, the RecF protein is involved in DNA metabolism; it is required for DNA replication and normal SOS inducibility. RecF binds preferentially to single-stranded, linear DNA. It also seems to bind ATP. The sequence is that of DNA replication and repair protein RecF from Anaeromyxobacter dehalogenans (strain 2CP-1 / ATCC BAA-258).